The sequence spans 414 residues: Lipoyl synthase, mitochondrial (414 aa).

The transit peptide at 1–18 (MYRRSVGVLFVGRNTRWI) directs the protein to the mitochondrion. Residues 51-67 (GNSTEVENATSQLTGTS) are compositionally biased toward polar residues. The disordered stretch occupies residues 51-75 (GNSTEVENATSQLTGTSGKRRKGNR). [4Fe-4S] cluster is bound by residues cysteine 150, cysteine 155, cysteine 161, cysteine 181, cysteine 185, cysteine 188, and serine 396. The Radical SAM core domain occupies 164–385 (GKDKSKATAT…KERALEMGFL (222 aa)).

This sequence belongs to the radical SAM superfamily. Lipoyl synthase family. [4Fe-4S] cluster serves as cofactor.

It localises to the mitochondrion. It catalyses the reaction [[Fe-S] cluster scaffold protein carrying a second [4Fe-4S](2+) cluster] + N(6)-octanoyl-L-lysyl-[protein] + 2 oxidized [2Fe-2S]-[ferredoxin] + 2 S-adenosyl-L-methionine + 4 H(+) = [[Fe-S] cluster scaffold protein] + N(6)-[(R)-dihydrolipoyl]-L-lysyl-[protein] + 4 Fe(3+) + 2 hydrogen sulfide + 2 5'-deoxyadenosine + 2 L-methionine + 2 reduced [2Fe-2S]-[ferredoxin]. It functions in the pathway protein modification; protein lipoylation via endogenous pathway; protein N(6)-(lipoyl)lysine from octanoyl-[acyl-carrier-protein]: step 2/2. Catalyzes the radical-mediated insertion of two sulfur atoms into the C-6 and C-8 positions of the octanoyl moiety bound to the lipoyl domains of lipoate-dependent enzymes, thereby converting the octanoylated domains into lipoylated derivatives. The sequence is that of Lipoyl synthase, mitochondrial from Saccharomyces cerevisiae (strain RM11-1a) (Baker's yeast).